We begin with the raw amino-acid sequence, 63 residues long: MPKSRTCSFCGGSIEPGTGLMYVLRNGQILWFCSSKCYKNFVKLRRKPDKLEWVRKVKKSLLD.

Positions 7, 10, 33, and 37 each coordinate Zn(2+). The C4-type zinc-finger motif lies at 7 to 37 (CSFCGGSIEPGTGLMYVLRNGQILWFCSSKC).

This sequence belongs to the eukaryotic ribosomal protein eL24 family. As to quaternary structure, part of the 50S ribosomal subunit. Forms a cluster with proteins L3 and L14. Zn(2+) serves as cofactor.

In terms of biological role, binds to the 23S rRNA. This chain is Large ribosomal subunit protein eL24, found in Aeropyrum pernix (strain ATCC 700893 / DSM 11879 / JCM 9820 / NBRC 100138 / K1).